Consider the following 89-residue polypeptide: Large ribosomal subunit protein bL27 (89 aa).

The disordered stretch occupies residues 1–20 (MAHKKAGGSSRNGRDSAGKR).

This sequence belongs to the bacterial ribosomal protein bL27 family.

The sequence is that of Large ribosomal subunit protein bL27 from Rhodopseudomonas palustris (strain HaA2).